A 357-amino-acid polypeptide reads, in one-letter code: 4-hydroxymandelate oxidase (357 aa).

An FMN hydroxy acid dehydrogenase domain is found at 1–357 (MTYVSLADLE…RRLNTKLGVV (357 aa)). Q126 serves as a coordination point for FMN. Y128 is a binding site for a 2-oxocarboxylate. FMN is bound at residue T154. R163 is a binding site for a 2-oxocarboxylate. K228 is an FMN binding site. Catalysis depends on H252, which acts as the Proton acceptor. R255 contributes to the a 2-oxocarboxylate binding site. FMN contacts are provided by residues 283–287 (DGGIR) and 306–307 (GR).

This sequence belongs to the FMN-dependent alpha-hydroxy acid dehydrogenase family. Requires FMN as cofactor.

The enzyme catalyses (S)-4-hydroxymandelate + O2 = 4-hydroxyphenylglyoxylate + H2O2. The protein operates within antibiotic biosynthesis; vancomycin biosynthesis. In terms of biological role, catalyzes the oxidation of p-hydroxymandelate to p-hydroxybenzoylformate in the biosynthesis of L-(4-hydroxyphenyl)glycine and L-(3,5-dihydroxyphenyl)glycine, 2 non-proteinogenic amino acids occurring in the vancomycin group of antibiotics. The chain is 4-hydroxymandelate oxidase (hmo) from Amycolatopsis orientalis (Nocardia orientalis).